Reading from the N-terminus, the 876-residue chain is Beta-glucosidase 1 (876 aa).

The N-terminal stretch at 1 to 17 (MLMIVQLLVFALGLAVA) is a signal peptide. Residues N22, N75, N224, and N267 are each glycosylated (N-linked (GlcNAc...) asparagine). D295 is an active-site residue. N-linked (GlcNAc...) asparagine glycans are attached at residues N332, N339, N372, N389, N426, N544, N585, N739, N780, and N790.

This sequence belongs to the glycosyl hydrolase 3 family.

The catalysed reaction is Hydrolysis of terminal, non-reducing beta-D-glucosyl residues with release of beta-D-glucose.. The protein operates within glycan metabolism; cellulose degradation. The sequence is that of Beta-glucosidase 1 (BGL1) from Saccharomycopsis fibuligera (Yeast).